A 427-amino-acid chain; its full sequence is Mannosylglucosylglycerate synthase (427 aa).

It belongs to the glycosyltransferase group 1 family. The cofactor is Co(2+). Requires Mg(2+) as cofactor. Mn(2+) is required as a cofactor. It depends on Ni(2+) as a cofactor.

The enzyme catalyses (2R)-2-O-(alpha-D-glucopyranosyl)-glycerate + GDP-alpha-D-mannose = (2R)-2-O-[alpha-D-mannopyranosyl-(1-&gt;2)-alpha-D-glucopyranosyl]-glycerate + GDP + H(+). In terms of biological role, catalyzes the synthesis of mannosylglucosylglycerate (MGG) from glucosylglycerate (GG) and GDP-mannose. In Thermotoga maritima (strain ATCC 43589 / DSM 3109 / JCM 10099 / NBRC 100826 / MSB8), this protein is Mannosylglucosylglycerate synthase.